Consider the following 115-residue polypeptide: Ribonuclease P protein component (115 aa).

This sequence belongs to the RnpA family. Consists of a catalytic RNA component (M1 or rnpB) and a protein subunit.

It catalyses the reaction Endonucleolytic cleavage of RNA, removing 5'-extranucleotides from tRNA precursor.. Its function is as follows. RNaseP catalyzes the removal of the 5'-leader sequence from pre-tRNA to produce the mature 5'-terminus. It can also cleave other RNA substrates such as 4.5S RNA. The protein component plays an auxiliary but essential role in vivo by binding to the 5'-leader sequence and broadening the substrate specificity of the ribozyme. In Bacillus mycoides (strain KBAB4) (Bacillus weihenstephanensis), this protein is Ribonuclease P protein component.